The sequence spans 168 residues: Pleiotrophin (168 aa).

Positions 1 to 32 are cleaved as a signal peptide; the sequence is MQTPQFLQQRRKFAAAFLAFIFLLAVVDTAEA. 5 cysteine pairs are disulfide-bonded: Cys-47–Cys-76, Cys-55–Cys-85, Cys-62–Cys-89, Cys-99–Cys-131, and Cys-109–Cys-141. Chondroitin sulfate binding stretches follow at residues 92-99 and 123-131; these read KKQFGAEC and KRALHNADC. The tract at residues 139–168 is disordered; it reads KPCGKVTKPKPQAESKKKKKEGKKQEKMLD. The chondroitin sulfate A binding stretch occupies residues 147-168; that stretch reads PKPQAESKKKKKEGKKQEKMLD.

Belongs to the pleiotrophin family. As to quaternary structure, interacts with ALK and NEK6. Interacts with PTPRZ1 (via chondroitin sulfate groups); promotes formation of homooligomers; oligomerization impairs tyrosine phosphatase activity. Forms a complex with PTPRZ1 and CTNNB1; this complex inactivates PTPRZ1 protein tyrosine phosphatase activity through PTN interaction and stimulates tyrosine phosphorylation of CTNNB1. Interacts with ITGB3 and ITGA5. Forms a complex with PTPRZ1 and integrin alpha-V/beta-3 (ITGAV:ITGB3) that stimulates endothelial cell migration through ITGB3 'Tyr-773' phosphorylation. Interacts with SDC3 (via heparan sulfate chains); this interaction mediates the neurite outgrowth-promoting signal from PTN to the cytoskeleton of growing neurites; this interaction mediates osteoblast recruitment. Interacts with GPC2 (via heparan sulfate); this interaction promotes neurite outgrowth through binding of PTN with chondroitin sulfate of proteoglycans, thereby releasing PTPRS of chondroitin sulfate proteoglycans (CSPGs) and leading to binding with heparan sulfate of GPC2. Post-translationally, phosphorylated by NEK6.

Its subcellular location is the secreted. In terms of biological role, secreted growth factor that mediates its signal through cell-surface proteoglycan and non-proteoglycan receptors. Binds cell-surface proteoglycan receptor via their chondroitin sulfate (CS) groups. Thereby regulates many processes like cell proliferation, cell survival, cell growth, cell differentiation and cell migration in several tissues namely neuron and bone. Also plays a role in synaptic plasticity and learning-related behavior by inhibiting long-term synaptic potentiation. Binds PTPRZ1, leading to neutralization of the negative charges of the CS chains of PTPRZ1, inducing PTPRZ1 clustering, thereby causing the dimerization and inactivation of its phosphatase activity leading to increased tyrosine phosphorylation of each of the PTPRZ1 substrates like ALK, CTNNB1 or AFAP1L2 in order to activate the PI3K-AKT pathway. Through PTPRZ1 binding controls oligodendrocyte precursor cell differentiation by enhancing the phosphorylation of AFAP1L2 in order to activate the PI3K-AKT pathway. Forms a complex with PTPRZ1 and integrin alpha-V/beta-3 (ITGAV:ITGB3) that stimulates endothelial cell migration through SRC dephosphorylation and activation that consequently leads to ITGB3 'Tyr-773' phosphorylation. In adult hippocampus promotes dendritic arborization, spine development, and functional integration and connectivity of newborn granule neurons through ALK by activating AKT signaling pathway. Binds GPC2 and chondroitin sulfate proteoglycans (CSPGs) at the neuron surface, leading to abrogation of binding between PTPRS and CSPGs and neurite outgrowth promotion. Binds SDC3 and mediates bone formation by recruiting and attaching osteoblasts/osteoblast precursors to the sites for new bone deposition. Binds ALK and promotes cell survival and cell proliferation through MAPK pathway activation. Inhibits proliferation and enhances differentiation of neural stem cells by inhibiting FGF2-induced fibroblast growth factor receptor signaling pathway. Mediates regulatory mechanisms in normal hemostasis and in hematopoietic regeneration and in maintaining the balance of myeloid and lymphoid regeneration. In addition may play a role in the female reproductive system, auditory response and the progesterone-induced decidualization pathway. The protein is Pleiotrophin of Sus scrofa (Pig).